Consider the following 278-residue polypeptide: MEYHSHTVVTERKVTLLEQGQASDLTDYVANEVRVALVYNGISHTVMLASPENLEEFAIGFTLSERIVSHVNEIKGVDLEFTPEGVLIQVEITQRCFMALKQLRRNMAGRTGCGLCGVAQLEEAVKPVIRVDSDARFNIDHLQFALEQVKDNQHHFKLTGATHAAMGLDLEGQIIAAYEDIGRHIALDKLIGGCSMRHAKRPVAVLLTSRASFEMVQKAASANIQILFAMSAVTSLALELAEKSNITLIGFCRNGRATLYTHGYRLLGLNRASLAKAI.

The active-site Cysteine persulfide intermediate is the Cys-113. 251-256 serves as a coordination point for Mo-bis(molybdopterin guanine dinucleotide); it reads FCRNGR.

The protein belongs to the FdhD family.

Its subcellular location is the cytoplasm. Required for formate dehydrogenase (FDH) activity. Acts as a sulfur carrier protein that transfers sulfur from IscS to the molybdenum cofactor prior to its insertion into FDH. This is Sulfur carrier protein FdhD from Shewanella oneidensis (strain ATCC 700550 / JCM 31522 / CIP 106686 / LMG 19005 / NCIMB 14063 / MR-1).